A 2512-amino-acid chain; its full sequence is RNA replication protein (2512 aa).

The region spanning 156–367 (RLTFSKNVAH…RLDVYLDKFL (212 aa)) is the Alphavirus-like MT domain. In terms of domain architecture, OTU spans 683 to 803 (LTVIQVPGDG…HSHYSLLVPC (121 aa)). One can recognise a (+)RNA virus helicase ATP-binding domain in the interval 1520 to 1696 (AIYTSLVAHN…DFVNTEARPL (177 aa)). The (+)RNA virus helicase C-terminal domain maps to 1697-1874 (ARTFRSPPDV…HLSLSGGGTT (178 aa)). Positions 2265-2378 (FDSLEIDIKK…VGEKRDLQCD (114 aa)) constitute a RdRp catalytic domain.

The catalysed reaction is ATP + H2O = ADP + phosphate + H(+). It carries out the reaction RNA(n) + a ribonucleoside 5'-triphosphate = RNA(n+1) + diphosphate. Its function is as follows. RNA replication. The central part of this protein possibly functions as an ATP-binding helicase (Potential). The chain is RNA replication protein from Citrus leprosis virus C (isolate Citrus sinesis/Brazil/Cordeiropolis/2003) (CiLV-C).